Here is a 387-residue protein sequence, read N- to C-terminus: tRNA pseudouridine synthase B (387 aa).

Asp43 functions as the Nucleophile in the catalytic mechanism.

This sequence belongs to the pseudouridine synthase TruB family. Type 1 subfamily.

It catalyses the reaction uridine(55) in tRNA = pseudouridine(55) in tRNA. Its function is as follows. Responsible for synthesis of pseudouridine from uracil-55 in the psi GC loop of transfer RNAs. In Bifidobacterium longum (strain NCC 2705), this protein is tRNA pseudouridine synthase B.